Consider the following 448-residue polypeptide: ATP-dependent protease ATPase subunit HslU (448 aa).

ATP contacts are provided by residues I23, G65–E70, D263, E327, and R399.

This sequence belongs to the ClpX chaperone family. HslU subfamily. In terms of assembly, a double ring-shaped homohexamer of HslV is capped on each side by a ring-shaped HslU homohexamer. The assembly of the HslU/HslV complex is dependent on binding of ATP.

It is found in the cytoplasm. ATPase subunit of a proteasome-like degradation complex; this subunit has chaperone activity. The binding of ATP and its subsequent hydrolysis by HslU are essential for unfolding of protein substrates subsequently hydrolyzed by HslV. HslU recognizes the N-terminal part of its protein substrates and unfolds these before they are guided to HslV for hydrolysis. The polypeptide is ATP-dependent protease ATPase subunit HslU (Borreliella burgdorferi (strain ATCC 35210 / DSM 4680 / CIP 102532 / B31) (Borrelia burgdorferi)).